Here is a 270-residue protein sequence, read N- to C-terminus: Multi-heme protein MamP (270 aa).

At 1–6 the chain is on the cytoplasmic side; that stretch reads MNSKLV. Positions 7 to 20 form a transmembrane segment; the sequence is LLVVGVVFALVLVI. Residues 21–270 are Lumenal-facing; that stretch reads GRQGGVVAPQ…GPCEACHVIN (250 aa). Positions 84–201 are PDZ; that stretch reads NLKVFEGHWQ…GGLGFAQLEG (118 aa). The MCR (magnetochrome) 1 signature appears at 205–225; sequence ILPGDPRPHGYRGACTDCHPV. Positions 219, 222, 223, 263, 266, and 267 each coordinate heme. An MCR 2 motif is present at residues 245 to 269; the sequence is ITRDAVTRGVSPHEVRGPCEACHVI.

The protein belongs to the magnetosome MamP family. As to quaternary structure, homodimer. Requires heme as cofactor. Subject to proteolytic cleavage which requires both MamE and MamO.

The protein resides in the cell inner membrane. Functionally, involved in redox-control of magnetite formation. Oxidizes Fe(2+) at alkaline pH; successively forms ferrihydrite (Fe(3+)(2)O(3) 0.5 H(2)O) then magnetite (Fe(3)O(4)) from an Fe(2+) solution. This chain is Multi-heme protein MamP, found in Magnetospirillum gryphiswaldense (strain DSM 6361 / JCM 21280 / NBRC 15271 / MSR-1).